We begin with the raw amino-acid sequence, 171 residues long: MIGILNRWRQFGRRYFWPHLLLGMVAASLGLPTSLNESQDIVSHPNSASSVSRQNSVSLSLTDLVALKEAHRRSSYSVDYWHQHAIRTVIRHLSFALTTPQTANAQQVDELQPHSLVLLDTLNALLTQDSQFPFVISPHAGRVTFYPQAHHQIGIWLAQIRGIRAGPYLLS.

The N-terminal stretch at 1–30 (MIGILNRWRQFGRRYFWPHLLLGMVAASLG) is a signal peptide.

It belongs to the SecM family.

It is found in the cytoplasm. The protein localises to the cytosol. The protein resides in the periplasm. In terms of biological role, regulates secA expression by translational coupling of the secM secA operon. Translational pausing at a specific Pro residue 5 residues before the end of the protein may allow disruption of a mRNA repressor helix that normally suppresses secA translation initiation. The protein is Secretion monitor of Pectobacterium atrosepticum (strain SCRI 1043 / ATCC BAA-672) (Erwinia carotovora subsp. atroseptica).